The chain runs to 695 residues: Rho-related BTB domain-containing protein 1 (695 aa).

Positions 1–210 (MDSDMDYERP…DNAIRAALIS (210 aa)) are rho-like. GTP-binding positions include 21–28 (GDNAVGKT), 84–88 (DTFGD), and 140–143 (CQLD). 2 consecutive BTB domains span residues 266–426 (ADVL…DEKE) and 484–551 (SDVT…SPNL). Residues 325-351 (SLGSAEEGKEGPQRTPQADPGASSGQD) form a disordered region.

Belongs to the small GTPase superfamily. Rho family. Highest expression in heart and testis.

This Mus musculus (Mouse) protein is Rho-related BTB domain-containing protein 1 (Rhobtb1).